The primary structure comprises 58 residues: Ferredoxin-2 (58 aa).

4Fe-4S ferredoxin-type domains are found at residues 2 to 27 (IEVN…MNEE) and 30 to 58 (KAVV…IVRS). Residue cysteine 8 coordinates [3Fe-4S] cluster. Position 11 is a cysteine methyl disulfide (cysteine 11). Cysteine 14 is a [3Fe-4S] cluster binding site. Cysteine 18 and cysteine 42 form a disulfide bridge. A [3Fe-4S] cluster-binding site is contributed by cysteine 50.

In terms of assembly, homodimer (ferredoxin I) or homotetramer (ferredoxin II). Requires [3Fe-4S] cluster as cofactor. It depends on [4Fe-4S] cluster as a cofactor.

Ferredoxins are iron-sulfur proteins that transfer electrons in a wide variety of metabolic reactions. The sequence is that of Ferredoxin-2 from Megalodesulfovibrio gigas (Desulfovibrio gigas).